The chain runs to 331 residues: Ferredoxin--NADP reductase 2 (331 aa).

FAD contacts are provided by Glu-37, Gln-45, Tyr-50, Val-90, Phe-124, Asp-286, and Thr-327.

The protein belongs to the ferredoxin--NADP reductase type 2 family. Homodimer. It depends on FAD as a cofactor.

The catalysed reaction is 2 reduced [2Fe-2S]-[ferredoxin] + NADP(+) + H(+) = 2 oxidized [2Fe-2S]-[ferredoxin] + NADPH. The chain is Ferredoxin--NADP reductase 2 from Listeria innocua serovar 6a (strain ATCC BAA-680 / CLIP 11262).